Consider the following 501-residue polypeptide: Glycerol kinase (501 aa).

Residue T17 participates in ADP binding. Positions 17, 18, and 19 each coordinate ATP. T17 serves as a coordination point for sn-glycerol 3-phosphate. R21 contributes to the ADP binding site. Sn-glycerol 3-phosphate is bound by residues R87, E88, Y139, and D243. Positions 87, 88, 139, 243, and 244 each coordinate glycerol. Residues T265 and G308 each contribute to the ADP site. Positions 265, 308, 312, and 409 each coordinate ATP. ADP-binding residues include G409 and N413.

Belongs to the FGGY kinase family.

The enzyme catalyses glycerol + ATP = sn-glycerol 3-phosphate + ADP + H(+). The protein operates within polyol metabolism; glycerol degradation via glycerol kinase pathway; sn-glycerol 3-phosphate from glycerol: step 1/1. Its activity is regulated as follows. Inhibited by fructose 1,6-bisphosphate (FBP). In terms of biological role, key enzyme in the regulation of glycerol uptake and metabolism. Catalyzes the phosphorylation of glycerol to yield sn-glycerol 3-phosphate. The sequence is that of Glycerol kinase from Pseudomonas syringae pv. tomato (strain ATCC BAA-871 / DC3000).